The sequence spans 38 residues: Potassium channel toxin alpha-KTx 2.10 (38 aa).

Cystine bridges form between C7–C29, C13–C34, and C17–C36.

As to expression, expressed by the venom gland.

The protein localises to the secreted. Functionally, blocks human voltage-gated potassium (Kv) channel Kv1.2/KCNA2. Does not inhibit human Kv1.1/KCNA1 at 100nM concentration. In Centruroides bonito (Scorpion), this protein is Potassium channel toxin alpha-KTx 2.10.